A 571-amino-acid polypeptide reads, in one-letter code: UvrABC system protein C (571 aa).

The 79-residue stretch at 15–93 (TSPGVYLWKD…VDRFNPEFNI (79 aa)) folds into the GIY-YIG domain. Positions 184-219 (NNYLNELTNKMHTAANNMQFELALFLRDGLTYLKKL) constitute a UVR domain.

The protein belongs to the UvrC family. In terms of assembly, interacts with UvrB in an incision complex.

It is found in the cytoplasm. Its function is as follows. The UvrABC repair system catalyzes the recognition and processing of DNA lesions. UvrC both incises the 5' and 3' sides of the lesion. The N-terminal half is responsible for the 3' incision and the C-terminal half is responsible for the 5' incision. This Mycoplasmopsis agalactiae (strain NCTC 10123 / CIP 59.7 / PG2) (Mycoplasma agalactiae) protein is UvrABC system protein C.